The primary structure comprises 130 residues: Small ribosomal subunit protein uS11 (130 aa).

This sequence belongs to the universal ribosomal protein uS11 family. Part of the 30S ribosomal subunit. Interacts with proteins S7 and S18. Binds to IF-3.

Located on the platform of the 30S subunit, it bridges several disparate RNA helices of the 16S rRNA. Forms part of the Shine-Dalgarno cleft in the 70S ribosome. In Nitrobacter hamburgensis (strain DSM 10229 / NCIMB 13809 / X14), this protein is Small ribosomal subunit protein uS11.